Reading from the N-terminus, the 496-residue chain is NADP-dependent glyceraldehyde-3-phosphate dehydrogenase (496 aa).

Substrate is bound by residues Arg-116 and 169 to 170 (NY). NADP(+) is bound by residues Lys-192, Thr-195, and Asp-230. NAD(+) is bound at residue 245–249 (GGDTG). Catalysis depends on Glu-264, which acts as the Proton acceptor. 297-299 (RCT) is a binding site for substrate. The active-site Nucleophile is the Cys-298. Glu-391 is an NADP(+) binding site. Substrate is bound at residue Arg-451.

This sequence belongs to the aldehyde dehydrogenase family.

It is found in the cytoplasm. It localises to the cytosol. It carries out the reaction D-glyceraldehyde 3-phosphate + NADP(+) + H2O = (2R)-3-phosphoglycerate + NADPH + 2 H(+). Competitive inhibition by NADPH, 3-phospho-D-glycerate and ATP. In terms of biological role, important as a means of generating NADPH for biosynthetic reactions. May be a main source of cytosolic NADPH for mannitol biosynthesis in leaves. In Apium graveolens (Celery), this protein is NADP-dependent glyceraldehyde-3-phosphate dehydrogenase.